The chain runs to 238 residues: uncharacterized protein (238 aa).

Helical transmembrane passes span 22–42 (VYGWMTAGLAVTALTSLGLYA), 49–69 (LFSLWWVWCFATLGVSFYIQA), 78–98 (AVMGLFLAYSVLEGMFFGTMV), 105–125 (FGGGIVWAAFGSAAVIFGLSA), 141–161 (ILMLALIGLMVISLGFLVVSL), 166–186 (PLMYLLICYLGLIIFVGLTVV), and 208–228 (LSLIMALQMYCNVIMIFWYLL).

It belongs to the BI1 family.

It localises to the cell membrane. This is an uncharacterized protein from Chlamydia muridarum (strain MoPn / Nigg).